A 556-amino-acid chain; its full sequence is CBS domain-containing protein CBSCBSPB3 (556 aa).

2 stretches are compositionally biased toward polar residues: residues 1–20 (MSTQ…NSTV) and 30–44 (PVQS…NTSK). Residues 1 to 63 (MSTQATGPSS…SQAPSNGERT (63 aa)) form a disordered region. Residue S2 is modified to N-acetylserine. CBS domains follow at residues 68–127 (RLSK…RPDQ), 134–189 (MTRN…RMEK), 235–294 (ITDN…LSPE), and 302–360 (MTPN…ENSS). The region spanning 414 to 502 (GNSFSFKFED…KVLRLHLDFT (89 aa)) is the PB1 domain. A helical transmembrane segment spans residues 527-549 (WVSWRGGVVVTGAVVLTSIAIVV).

The protein localises to the membrane. The protein is CBS domain-containing protein CBSCBSPB3 (CBSCBSPB3) of Arabidopsis thaliana (Mouse-ear cress).